A 770-amino-acid chain; its full sequence is Polymerase basic protein 2 (770 aa).

The short motif at K740 to R743 is the Nuclear localization signal element.

This sequence belongs to the influenza viruses PB2 family. Influenza RNA polymerase is composed of three subunits: PB1, PB2 and PA. Interacts (via N-terminus) with PB1 (via C-terminus). Interacts with nucleoprotein NP (via N-terminus). Interacts with host ANP32A (via C-terminus) and ANP32B; these interactions promote viral RNA synthesis.

It is found in the virion. The protein localises to the host nucleus. Its function is as follows. Plays an essential role in transcription initiation and cap-stealing mechanism, in which cellular capped pre-mRNAs are used to generate primers for viral transcription. Recognizes and binds a wide range of cap structures of target pre-RNAs which are subsequently cleaved after 10-13 nucleotides by the viral protein PA. Plays a role in the initiation of the viral genome replication and modulates the activity of the ribonucleoprotein (RNP) complex. The polypeptide is Polymerase basic protein 2 (Influenza B virus (strain B/Lee/1940)).